Reading from the N-terminus, the 354-residue chain is Rhodopsin (354 aa).

Over 1–36 (MNGTEGENFYIPMSNKTGVVRSPFDYPQYYLAEPWK) the chain is Extracellular. Residues N2 and N15 are each glycosylated (N-linked (GlcNAc...) asparagine). A helical transmembrane segment spans residues 37-61 (FSVLAAYMFFLIIAGFPVNFLTLYV). Topologically, residues 62–73 (TIQHKKLRQPLN) are cytoplasmic. The helical transmembrane segment at 74 to 96 (YILLNLAVADLFMIFGGFPSTMI) threads the bilayer. Topologically, residues 97-110 (TSMNGYFVFGPSGC) are extracellular. A disulfide bond links C110 and C187. A helical membrane pass occupies residues 111-133 (NFEGFFATLGGEIGLWSLVVLAI). The short motif at 134-136 (ERY) is the 'Ionic lock' involved in activated form stabilization element. Topologically, residues 134–152 (ERYVVVCKPMSNFRFGSQH) are cytoplasmic. Residues 153 to 173 (AFMGVGLTWIMAMACAFPPLV) form a helical membrane-spanning segment. At 174 to 202 (GWSRYIPEGMQCSCGIDYYTLKPEVNNES) the chain is on the extracellular side. A glycan (N-linked (GlcNAc...) asparagine) is linked at N200. A helical membrane pass occupies residues 203–224 (FVIYMFVVHFSIPLTIIFFCYG). Topologically, residues 225 to 252 (RLVCTVKEAAAQQQESETTQRAEREVTR) are cytoplasmic. Residues 253 to 274 (MVIIMVIAFLICWLPYASVAFF) form a helical membrane-spanning segment. The Extracellular segment spans residues 275–286 (IFCNQGSEFGPI). Residues 287–308 (FMTIPAFFAKAASLYNPLIYIL) traverse the membrane as a helical segment. K296 is modified (N6-(retinylidene)lysine). At 309–354 (MNKQFRNCMITTICCGKNPFEEEESTSASASKTEASSVSSSQVAPA) the chain is on the cytoplasmic side. S-palmitoyl cysteine attachment occurs at residues C322 and C323. Residues 333-354 (STSASASKTEASSVSSSQVAPA) form a disordered region. The segment covering 334 to 354 (TSASASKTEASSVSSSQVAPA) has biased composition (low complexity).

It belongs to the G-protein coupled receptor 1 family. Opsin subfamily. Post-translationally, phosphorylated on some or all of the serine and threonine residues present in the C-terminal region. In terms of processing, contains one covalently linked retinal chromophore.

The protein localises to the membrane. It is found in the cell projection. The protein resides in the cilium. It localises to the photoreceptor outer segment. Photoreceptor required for image-forming vision at low light intensity. While most salt water fish species use retinal as chromophore, most freshwater fish use 3-dehydroretinal, or a mixture of retinal and 3-dehydroretinal. Light-induced isomerization of 11-cis to all-trans retinal triggers a conformational change that activates signaling via G-proteins. Subsequent receptor phosphorylation mediates displacement of the bound G-protein alpha subunit by arrestin and terminates signaling. The polypeptide is Rhodopsin (rho) (Scyliorhinus canicula (Small-spotted catshark)).